Consider the following 38-residue polypeptide: Photosystem II reaction center protein L (38 aa).

The chain crosses the membrane as a helical span at residues 17–37 (SLFWGLLLIFVLAILFSSYIF).

The protein belongs to the PsbL family. PSII is composed of 1 copy each of membrane proteins PsbA, PsbB, PsbC, PsbD, PsbE, PsbF, PsbH, PsbI, PsbJ, PsbK, PsbL, PsbM, PsbT, PsbX, PsbY, PsbZ, Psb30/Ycf12, at least 3 peripheral proteins of the oxygen-evolving complex and a large number of cofactors. It forms dimeric complexes.

The protein localises to the plastid. The protein resides in the cyanelle thylakoid membrane. In terms of biological role, one of the components of the core complex of photosystem II (PSII). PSII is a light-driven water:plastoquinone oxidoreductase that uses light energy to abstract electrons from H(2)O, generating O(2) and a proton gradient subsequently used for ATP formation. It consists of a core antenna complex that captures photons, and an electron transfer chain that converts photonic excitation into a charge separation. This subunit is found at the monomer-monomer interface and is required for correct PSII assembly and/or dimerization. The chain is Photosystem II reaction center protein L from Cyanophora paradoxa.